Consider the following 374-residue polypeptide: (R)-phenyllactyl-CoA dehydratase beta subunit (374 aa).

Belongs to the FldB/FldC dehydratase alpha/beta subunit family. As to quaternary structure, part of the heterotrimeric phenyllactate dehydratase complex FldABC, composed of (R)-phenyllactate CoA-transferase (FldA) and a heterodimeric (R)-phenyllactyl-CoA dehydratase (FldB and FldC). [4Fe-4S] cluster serves as cofactor. No flavin could be detected in the FldABC complex, and the addition of FAD, FMN or riboflavin to the dehydratase do not increase enzymatic activity. is required as a cofactor.

The enzyme catalyses (R)-3-phenyllactoyl-CoA = (E)-cinnamoyl-CoA + H2O. The catalysed reaction is (R)-3-(4-hydroxyphenyl)lactoyl-CoA = (E)-4-coumaroyl-CoA + H2O. It catalyses the reaction (R)-3-(indol-3-yl)lactoyl-CoA = (E)-3-(indol-3-yl)acryloyl-CoA + H2O. It functions in the pathway amino-acid degradation; L-phenylalanine degradation. Its function is as follows. Component of the phenyllactate dehydratase complex FldABC that is involved in the fermentation of L-phenylalanine via a Stickland reaction. This complex catalyzes the reversible syn-dehydration of (R)-phenyllactate to (E)-cinnamate in two steps, a CoA-transfer from cinnamoyl-CoA to phenyllactate, catalyzed by FldA, followed by the dehydration of phenyllactyl-CoA to cinnamoyl-CoA, catalyzed by FldB and FldC. Requires the activator FldI to initiate catalysis. The sequence is that of (R)-phenyllactyl-CoA dehydratase beta subunit from Clostridium sporogenes.